A 143-amino-acid chain; its full sequence is FAD synthase (143 aa).

Residues 11–12 (TF), 16–19 (HPGH), and aspartate 94 each bind ATP.

The protein belongs to the archaeal FAD synthase family. In terms of assembly, homodimer. The cofactor is a divalent metal cation.

The catalysed reaction is FMN + ATP + H(+) = FAD + diphosphate. It participates in cofactor biosynthesis; FAD biosynthesis; FAD from FMN: step 1/1. In terms of biological role, catalyzes the transfer of the AMP portion of ATP to flavin mononucleotide (FMN) to produce flavin adenine dinucleotide (FAD) coenzyme. The sequence is that of FAD synthase from Halomicrobium mukohataei (strain ATCC 700874 / DSM 12286 / JCM 9738 / NCIMB 13541) (Haloarcula mukohataei).